We begin with the raw amino-acid sequence, 370 residues long: DNA primase large subunit PriL (370 aa).

The [4Fe-4S] cluster site is built by C230, C301, C310, and C317. Positions E337–K370 are disordered.

This sequence belongs to the eukaryotic-type primase large subunit family. Heterodimer of a small subunit (PriS) and a large subunit (PriL). The cofactor is [4Fe-4S] cluster.

Functionally, regulatory subunit of DNA primase, an RNA polymerase that catalyzes the synthesis of short RNA molecules used as primers for DNA polymerase during DNA replication. Stabilizes and modulates the activity of the small subunit, increasing the rate of DNA synthesis, and conferring RNA synthesis capability. The DNA polymerase activity may enable DNA primase to also catalyze primer extension after primer synthesis. May also play a role in DNA repair. The protein is DNA primase large subunit PriL of Methanosarcina mazei (strain ATCC BAA-159 / DSM 3647 / Goe1 / Go1 / JCM 11833 / OCM 88) (Methanosarcina frisia).